The following is a 250-amino-acid chain: 1-(5-phosphoribosyl)-5-[(5-phosphoribosylamino)methylideneamino] imidazole-4-carboxamide isomerase (250 aa).

The active-site Proton acceptor is aspartate 8. Catalysis depends on aspartate 131, which acts as the Proton donor.

This sequence belongs to the HisA/HisF family.

Its subcellular location is the cytoplasm. The enzyme catalyses 1-(5-phospho-beta-D-ribosyl)-5-[(5-phospho-beta-D-ribosylamino)methylideneamino]imidazole-4-carboxamide = 5-[(5-phospho-1-deoxy-D-ribulos-1-ylimino)methylamino]-1-(5-phospho-beta-D-ribosyl)imidazole-4-carboxamide. The protein operates within amino-acid biosynthesis; L-histidine biosynthesis; L-histidine from 5-phospho-alpha-D-ribose 1-diphosphate: step 4/9. This Paraburkholderia xenovorans (strain LB400) protein is 1-(5-phosphoribosyl)-5-[(5-phosphoribosylamino)methylideneamino] imidazole-4-carboxamide isomerase.